We begin with the raw amino-acid sequence, 232 residues long: AA9 family lytic polysaccharide monooxygenase C (232 aa).

An N-terminal signal peptide occupies residues 1 to 19; the sequence is MKAAVSLALLVAVAGAASA. Cu(2+) contacts are provided by histidine 20 and histidine 91. Cysteines 61 and 180 form a disulfide. O2 contacts are provided by histidine 166 and glutamine 175. Tyrosine 177 lines the Cu(2+) pocket. Residue asparagine 184 is glycosylated (N-linked (GlcNAc...) asparagine).

Belongs to the polysaccharide monooxygenase AA9 family. The cofactor is Cu(2+).

The protein resides in the secreted. It catalyses the reaction [(1-&gt;4)-beta-D-glucosyl]n+m + reduced acceptor + O2 = 4-dehydro-beta-D-glucosyl-[(1-&gt;4)-beta-D-glucosyl]n-1 + [(1-&gt;4)-beta-D-glucosyl]m + acceptor + H2O.. In terms of biological role, lytic polysaccharide monooxygenase (LPMO) that depolymerizes crystalline and amorphous polysaccharides via the oxidation of scissile alpha- or beta-(1-4)-glycosidic bonds, yielding C1 or C4 oxidation products. Catalysis by LPMOs requires the reduction of the active-site copper from Cu(II) to Cu(I) by a reducing agent and H(2)O(2) or O(2) as a cosubstrate. This chain is AA9 family lytic polysaccharide monooxygenase C, found in Malbranchea cinnamomea (Thermophilic fungus).